The primary structure comprises 371 residues: Assembly protein G7 (371 aa).

This sequence belongs to the chordopoxvirinae G7 family. In terms of assembly, part of a complex composed of A30, G7, F10 kinase, A15, D2, D3, and J1. In terms of processing, phosphorylated on serines by F10 kinase, phosphorylation state is regulated by H1 phosphatase. Undergoes proteolytic processing during morphogenesis, probably required for the transformation of immature virions (IV) into mature virions (MV).

The protein resides in the host cytoplasm. Its subcellular location is the virion. Its function is as follows. Late protein which is a part of a large complex required for early virion morphogenesis. This complex participates in the formation of virosomes and the incorporation of virosomal contents into nascent immature virions. The protein is Assembly protein G7 of Vaccinia virus (strain Copenhagen) (VACV).